Here is a 746-residue protein sequence, read N- to C-terminus: NAD(P)H-quinone oxidoreductase subunit 5, chloroplastic (746 aa).

16 consecutive transmembrane segments (helical) span residues 9–29, 40–60, 89–109, 125–145, 147–167, 185–205, 221–241, 258–278, 280–300, 327–347, 354–374, 396–416, 425–445, 547–567, 608–628, and 723–743; these read WIIPFIPLPVPILLGVGLLLF, WTFLSIFLLSIVMIFALYLSI, IDPLTSIMSILITTVGILVLI, FAYMGFFNTSMLGLVTSSNLI, VYFFWELVGMCSYLLIGFWFT, GDFGLLLGILGLYWITGSFEF, VNFLFLTLCAFLLFVGPIAKS, TPISALIHAATMVAAGIFLVA, LLPLFIVIPSIMYIISLIGII, LGYMMLALGMGSYRSALFHLI, ALLFLGSGSIIHSMEAIVGYS, TAFLVGTLSLCGIPPLACFWS, LLFSPIFAIIACSTAGLTAFY, ILFPMLVLLLFTLFIGAIGIP, FSVSIAFFGIFIAYCLYKPFY, and YLFLYLSYVLIFLTILFFFYF.

It belongs to the complex I subunit 5 family. As to quaternary structure, NDH is composed of at least 16 different subunits, 5 of which are encoded in the nucleus.

The protein localises to the plastid. The protein resides in the chloroplast thylakoid membrane. It catalyses the reaction a plastoquinone + NADH + (n+1) H(+)(in) = a plastoquinol + NAD(+) + n H(+)(out). It carries out the reaction a plastoquinone + NADPH + (n+1) H(+)(in) = a plastoquinol + NADP(+) + n H(+)(out). Its function is as follows. NDH shuttles electrons from NAD(P)H:plastoquinone, via FMN and iron-sulfur (Fe-S) centers, to quinones in the photosynthetic chain and possibly in a chloroplast respiratory chain. The immediate electron acceptor for the enzyme in this species is believed to be plastoquinone. Couples the redox reaction to proton translocation, and thus conserves the redox energy in a proton gradient. This chain is NAD(P)H-quinone oxidoreductase subunit 5, chloroplastic (ndhF), found in Barbarea verna (Land cress).